A 96-amino-acid chain; its full sequence is Putative pterin-4-alpha-carbinolamine dehydratase (96 aa).

This sequence belongs to the pterin-4-alpha-carbinolamine dehydratase family.

It catalyses the reaction (4aS,6R)-4a-hydroxy-L-erythro-5,6,7,8-tetrahydrobiopterin = (6R)-L-erythro-6,7-dihydrobiopterin + H2O. The protein is Putative pterin-4-alpha-carbinolamine dehydratase of Prochlorococcus marinus (strain MIT 9313).